Reading from the N-terminus, the 187-residue chain is Elongation factor P (187 aa).

Belongs to the elongation factor P family.

The protein localises to the cytoplasm. The protein operates within protein biosynthesis; polypeptide chain elongation. In terms of biological role, involved in peptide bond synthesis. Stimulates efficient translation and peptide-bond synthesis on native or reconstituted 70S ribosomes in vitro. Probably functions indirectly by altering the affinity of the ribosome for aminoacyl-tRNA, thus increasing their reactivity as acceptors for peptidyl transferase. This Zymomonas mobilis subsp. mobilis (strain ATCC 31821 / ZM4 / CP4) protein is Elongation factor P.